Consider the following 529-residue polypeptide: CTP synthase (529 aa).

The interval 1–267 (MKEAKFIFVT…DTQILEHFHL (267 aa)) is amidoligase domain. S15 lines the CTP pocket. S15 provides a ligand contact to UTP. ATP is bound by residues 16–21 (SLGKGL) and D73. Residues D73 and E141 each contribute to the Mg(2+) site. CTP is bound by residues 148–150 (DIE), 188–193 (KTKPTQ), and K224. UTP is bound by residues 188 to 193 (KTKPTQ) and K224. The Glutamine amidotransferase type-1 domain maps to 292–529 (TVSIVGKYTE…SFVKAAIDKK (238 aa)). Position 354 (G354) interacts with L-glutamine. Residue C381 is the Nucleophile; for glutamine hydrolysis of the active site. L-glutamine contacts are provided by residues 382-385 (LGMQ), E405, and R459. Residues H504 and E506 contribute to the active site.

Belongs to the CTP synthase family. As to quaternary structure, homotetramer.

The catalysed reaction is UTP + L-glutamine + ATP + H2O = CTP + L-glutamate + ADP + phosphate + 2 H(+). It catalyses the reaction L-glutamine + H2O = L-glutamate + NH4(+). The enzyme catalyses UTP + NH4(+) + ATP = CTP + ADP + phosphate + 2 H(+). It participates in pyrimidine metabolism; CTP biosynthesis via de novo pathway; CTP from UDP: step 2/2. Its activity is regulated as follows. Allosterically activated by GTP, when glutamine is the substrate; GTP has no effect on the reaction when ammonia is the substrate. The allosteric effector GTP functions by stabilizing the protein conformation that binds the tetrahedral intermediate(s) formed during glutamine hydrolysis. Inhibited by the product CTP, via allosteric rather than competitive inhibition. Catalyzes the ATP-dependent amination of UTP to CTP with either L-glutamine or ammonia as the source of nitrogen. Regulates intracellular CTP levels through interactions with the four ribonucleotide triphosphates. The chain is CTP synthase from Wolbachia pipientis wMel.